Reading from the N-terminus, the 378-residue chain is Polygalacturonase (378 aa).

An N-terminal signal peptide occupies residues 1-20 (MILTRSVVLGFLGSASLALA). Residues Cys-39 and Cys-57 are joined by a disulfide bond. PbH1 repeat units follow at residues 172–203 (SSGL…DIGD), 204–225 (SDSI…AINS), 226–246 (GTNI…SIGS), 255–276 (VETV…RVKA), and 284–306 (IKGV…TIRQ). Asp-218 serves as the catalytic Proton donor. Cys-220 and Cys-236 form a disulfide bridge. His-240 is an active-site residue. 2 disulfides stabilise this stretch: Cys-346-Cys-352 and Cys-370-Cys-378.

This sequence belongs to the glycosyl hydrolase 28 family.

The protein resides in the secreted. The enzyme catalyses (1,4-alpha-D-galacturonosyl)n+m + H2O = (1,4-alpha-D-galacturonosyl)n + (1,4-alpha-D-galacturonosyl)m.. The chain is Polygalacturonase (PEPG1) from Penicillium expansum (Blue mold rot fungus).